The sequence spans 402 residues: Mannonate dehydratase 1 (402 aa).

The protein belongs to the mannonate dehydratase family. Fe(2+) serves as cofactor. It depends on Mn(2+) as a cofactor.

The catalysed reaction is D-mannonate = 2-dehydro-3-deoxy-D-gluconate + H2O. Its pathway is carbohydrate metabolism; pentose and glucuronate interconversion. Functionally, catalyzes the dehydration of D-mannonate. This chain is Mannonate dehydratase 1 (uxuA1), found in Agrobacterium fabrum (strain C58 / ATCC 33970) (Agrobacterium tumefaciens (strain C58)).